The chain runs to 443 residues: Ribosomal protein uS12 methylthiotransferase RimO (443 aa).

The 111-residue stretch at 5 to 115 folds into the MTTase N-terminal domain; sequence PNIGFISLGC…VMKHVHKYVP (111 aa). Cys-14, Cys-50, Cys-79, Cys-147, Cys-151, and Cys-154 together coordinate [4Fe-4S] cluster. Positions 133–374 constitute a Radical SAM core domain; it reads LTPKHYAYLK…MQLQQKISAE (242 aa). The TRAM domain occupies 377–443; sequence RQKIGRTLSV…ADEYDLWGEI (67 aa).

Belongs to the methylthiotransferase family. RimO subfamily. [4Fe-4S] cluster is required as a cofactor.

The protein localises to the cytoplasm. The enzyme catalyses L-aspartate(89)-[ribosomal protein uS12]-hydrogen + (sulfur carrier)-SH + AH2 + 2 S-adenosyl-L-methionine = 3-methylsulfanyl-L-aspartate(89)-[ribosomal protein uS12]-hydrogen + (sulfur carrier)-H + 5'-deoxyadenosine + L-methionine + A + S-adenosyl-L-homocysteine + 2 H(+). In terms of biological role, catalyzes the methylthiolation of an aspartic acid residue of ribosomal protein uS12. The polypeptide is Ribosomal protein uS12 methylthiotransferase RimO (Histophilus somni (strain 2336) (Haemophilus somnus)).